Here is a 183-residue protein sequence, read N- to C-terminus: Ubiquitin-conjugating enzyme E2-21 kDa (183 aa).

The region spanning 17 to 179 (TCMSRIVKEY…VKYFLAERER (163 aa)) is the UBC core domain. Residue C115 is the Glycyl thioester intermediate of the active site.

Belongs to the ubiquitin-conjugating enzyme family.

Its subcellular location is the peroxisome. The enzyme catalyses S-ubiquitinyl-[E1 ubiquitin-activating enzyme]-L-cysteine + [E2 ubiquitin-conjugating enzyme]-L-cysteine = [E1 ubiquitin-activating enzyme]-L-cysteine + S-ubiquitinyl-[E2 ubiquitin-conjugating enzyme]-L-cysteine.. The protein operates within protein modification; protein ubiquitination. In terms of biological role, catalyzes the covalent attachment of ubiquitin to other proteins. Essential for peroxisome biogenesis. Required for UBC4-independent ubiquitination of PEX5. This chain is Ubiquitin-conjugating enzyme E2-21 kDa (PEX4), found in Saccharomyces cerevisiae (strain ATCC 204508 / S288c) (Baker's yeast).